Here is a 698-residue protein sequence, read N- to C-terminus: Methionine--tRNA ligase (698 aa).

The 'HIGH' region motif lies at 18–28 (PYANGDLHVGH). Zn(2+) is bound by residues C149, C152, C161, and C165. T350 is a binding site for ATP. Residues 567 to 590 (EAADAGDEEGEDEDEEPPAADLEP) are disordered. A compositionally biased stretch (acidic residues) spans 570–584 (DAGDEEGEDEDEEPP). Residues 600–698 (DFQDLDIRVA…EDAEPGTKVQ (99 aa)) enclose the tRNA-binding domain.

The protein belongs to the class-I aminoacyl-tRNA synthetase family. MetG type 1 subfamily. In terms of assembly, homodimer. The cofactor is Zn(2+).

The protein resides in the cytoplasm. It carries out the reaction tRNA(Met) + L-methionine + ATP = L-methionyl-tRNA(Met) + AMP + diphosphate. Is required not only for elongation of protein synthesis but also for the initiation of all mRNA translation through initiator tRNA(fMet) aminoacylation. The sequence is that of Methionine--tRNA ligase from Natronomonas pharaonis (strain ATCC 35678 / DSM 2160 / CIP 103997 / JCM 8858 / NBRC 14720 / NCIMB 2260 / Gabara) (Halobacterium pharaonis).